A 371-amino-acid chain; its full sequence is Transposase for insertion sequence element IS421 (371 aa).

The protein belongs to the transposase 11 family.

Involved in the transposition of the insertion sequence IS421. This Escherichia coli protein is Transposase for insertion sequence element IS421.